A 360-amino-acid polypeptide reads, in one-letter code: Mitogen-activated protein kinase 14 (360 aa).

S2 carries the N-acetylserine modification. Phosphoserine is present on S2. T16 is subject to Phosphothreonine. The region spanning 24 to 308 (YQNLSPVGSG…AAQALAHAYF (285 aa)) is the Protein kinase domain. ATP-binding positions include 30–38 (VGSGAYGSV) and K53. 2 positions are modified to N6-acetyllysine: K53 and K152. Residue D168 is the Proton acceptor of the active site. Phosphothreonine; by MAP2K3, MAP2K4, MAP2K6 and autocatalysis is present on T180. Positions 180 to 182 (TGY) match the TXY motif. Residue Y182 is modified to Phosphotyrosine; by MAP2K3, MAP2K4, MAP2K6 and autocatalysis. The residue at position 263 (T263) is a Phosphothreonine. Residue Y323 is modified to Phosphotyrosine; by ZAP70.

Belongs to the protein kinase superfamily. CMGC Ser/Thr protein kinase family. MAP kinase subfamily. As to quaternary structure, component of a signaling complex containing at least AKAP13, PKN1, MAPK14, ZAK and MAP2K3. Within this complex, AKAP13 interacts directly with PKN1, which in turn recruits MAPK14, MAP2K3 and ZAK. Binds to a kinase interaction motif within the protein tyrosine phosphatase, PTPRR. This interaction retains MAPK14 in the cytoplasm and prevents nuclear accumulation. Interacts with SPAG9 and GADD45A. Interacts with CDC25B, CDC25C, DUSP1, DUSP10, DUSP16, NP60, SUPT20H and TAB1. Interacts with casein kinase II subunits CSNK2A1 and CSNK2B. Interacts with PPM1D. Interacts with CDK5RAP3; recruits PPM1D to MAPK14 and may regulate its dephosphorylation. Interacts with DUSP2; this interaction does not lead to catalytic activation of DUSP2 and dephosphrylation of MAPK14. Requires Mg(2+) as cofactor. Dually phosphorylated on Thr-180 and Tyr-182 by the MAP2Ks MAP2K3/MKK3, MAP2K4/MKK4 and MAP2K6/MKK6 in response to inflammatory citokines, environmental stress or growth factors, which activates the enzyme. Dual phosphorylation can also be mediated by TAB1-mediated autophosphorylation. TCR engagement in T-cells also leads to Tyr-323 phosphorylation by ZAP70. Dephosphorylated and inactivated by DUPS1, DUSP10 and DUSP16. PPM1D also mediates dephosphorylation and inactivation of MAPK14. In terms of processing, acetylated at Lys-53 and Lys-152 by KAT2B and EP300. Acetylation at Lys-53 increases the affinity for ATP and enhances kinase activity. Lys-53 and Lys-152 are deacetylated by HDAC3. Post-translationally, ubiquitinated. Ubiquitination leads to degradation by the proteasome pathway. Brain, heart, placenta, pancreas and skeletal muscle. Expressed to a lesser extent in lung, liver and kidney.

The protein resides in the cytoplasm. Its subcellular location is the nucleus. The catalysed reaction is L-seryl-[protein] + ATP = O-phospho-L-seryl-[protein] + ADP + H(+). It carries out the reaction L-threonyl-[protein] + ATP = O-phospho-L-threonyl-[protein] + ADP + H(+). Its activity is regulated as follows. Activated by cell stresses such as DNA damage, heat shock, osmotic shock, anisomycin and sodium arsenite, as well as pro-inflammatory stimuli such as bacterial lipopolysaccharide (LPS) and interleukin-1. Activation occurs through dual phosphorylation of Thr-180 and Tyr-182 by either of two dual specificity kinases, MAP2K3/MKK3 or MAP2K6/MKK6, and potentially also MAP2K4/MKK4, as well as by TAB1-mediated autophosphorylation. MAPK14 phosphorylated on both Thr-180 and Tyr-182 is 10-20-fold more active than MAPK14 phosphorylated only on Thr-180, whereas MAPK14 phosphorylated on Tyr-182 alone is inactive. whereas Thr-180 is necessary for catalysis, Tyr-182 may be required for auto-activation and substrate recognition. Phosphorylated at Tyr-323 by ZAP70 in an alternative activation pathway in response to TCR signaling in T-cells. This alternative pathway is inhibited by GADD45A. Inhibited by dual specificity phosphatases, such as DUSP1, DUSP10, and DUSP16. Specifically inhibited by the binding of pyridinyl-imidazole compounds, which are cytokine-suppressive anti-inflammatory drugs (CSAID). Isoform Mxi2 is 100-fold less sensitive to these agents than the other isoforms and is not inhibited by DUSP1. Isoform Exip is not activated by MAP2K6. SB203580 is an inhibitor of MAPK14. In terms of biological role, serine/threonine kinase which acts as an essential component of the MAP kinase signal transduction pathway. MAPK14 is one of the four p38 MAPKs which play an important role in the cascades of cellular responses evoked by extracellular stimuli such as pro-inflammatory cytokines or physical stress leading to direct activation of transcription factors. Accordingly, p38 MAPKs phosphorylate a broad range of proteins and it has been estimated that they may have approximately 200 to 300 substrates each. Some of the targets are downstream kinases which are activated through phosphorylation and further phosphorylate additional targets. RPS6KA5/MSK1 and RPS6KA4/MSK2 can directly phosphorylate and activate transcription factors such as CREB1, ATF1, the NF-kappa-B isoform RELA/NFKB3, STAT1 and STAT3, but can also phosphorylate histone H3 and the nucleosomal protein HMGN1. RPS6KA5/MSK1 and RPS6KA4/MSK2 play important roles in the rapid induction of immediate-early genes in response to stress or mitogenic stimuli, either by inducing chromatin remodeling or by recruiting the transcription machinery. On the other hand, two other kinase targets, MAPKAPK2/MK2 and MAPKAPK3/MK3, participate in the control of gene expression mostly at the post-transcriptional level, by phosphorylating ZFP36 (tristetraprolin) and ELAVL1, and by regulating EEF2K, which is important for the elongation of mRNA during translation. MKNK1/MNK1 and MKNK2/MNK2, two other kinases activated by p38 MAPKs, regulate protein synthesis by phosphorylating the initiation factor EIF4E2. MAPK14 also interacts with casein kinase II, leading to its activation through autophosphorylation and further phosphorylation of TP53/p53. In the cytoplasm, the p38 MAPK pathway is an important regulator of protein turnover. For example, CFLAR is an inhibitor of TNF-induced apoptosis whose proteasome-mediated degradation is regulated by p38 MAPK phosphorylation. In a similar way, MAPK14 phosphorylates the ubiquitin ligase SIAH2, regulating its activity towards EGLN3. MAPK14 may also inhibit the lysosomal degradation pathway of autophagy by interfering with the intracellular trafficking of the transmembrane protein ATG9. Another function of MAPK14 is to regulate the endocytosis of membrane receptors by different mechanisms that impinge on the small GTPase RAB5A. In addition, clathrin-mediated EGFR internalization induced by inflammatory cytokines and UV irradiation depends on MAPK14-mediated phosphorylation of EGFR itself as well as of RAB5A effectors. Ectodomain shedding of transmembrane proteins is regulated by p38 MAPKs as well. In response to inflammatory stimuli, p38 MAPKs phosphorylate the membrane-associated metalloprotease ADAM17. Such phosphorylation is required for ADAM17-mediated ectodomain shedding of TGF-alpha family ligands, which results in the activation of EGFR signaling and cell proliferation. Another p38 MAPK substrate is FGFR1. FGFR1 can be translocated from the extracellular space into the cytosol and nucleus of target cells, and regulates processes such as rRNA synthesis and cell growth. FGFR1 translocation requires p38 MAPK activation. In the nucleus, many transcription factors are phosphorylated and activated by p38 MAPKs in response to different stimuli. Classical examples include ATF1, ATF2, ATF6, ELK1, PTPRH, DDIT3, TP53/p53 and MEF2C and MEF2A. The p38 MAPKs are emerging as important modulators of gene expression by regulating chromatin modifiers and remodelers. The promoters of several genes involved in the inflammatory response, such as IL6, IL8 and IL12B, display a p38 MAPK-dependent enrichment of histone H3 phosphorylation on 'Ser-10' (H3S10ph) in LPS-stimulated myeloid cells. This phosphorylation enhances the accessibility of the cryptic NF-kappa-B-binding sites marking promoters for increased NF-kappa-B recruitment. Phosphorylates CDC25B and CDC25C which is required for binding to 14-3-3 proteins and leads to initiation of a G2 delay after ultraviolet radiation. Phosphorylates TIAR following DNA damage, releasing TIAR from GADD45A mRNA and preventing mRNA degradation. The p38 MAPKs may also have kinase-independent roles, which are thought to be due to the binding to targets in the absence of phosphorylation. Protein O-Glc-N-acylation catalyzed by the OGT is regulated by MAPK14, and, although OGT does not seem to be phosphorylated by MAPK14, their interaction increases upon MAPK14 activation induced by glucose deprivation. This interaction may regulate OGT activity by recruiting it to specific targets such as neurofilament H, stimulating its O-Glc-N-acylation. Required in mid-fetal development for the growth of embryo-derived blood vessels in the labyrinth layer of the placenta. Also plays an essential role in developmental and stress-induced erythropoiesis, through regulation of EPO gene expression. Isoform MXI2 activation is stimulated by mitogens and oxidative stress and only poorly phosphorylates ELK1 and ATF2. Isoform EXIP may play a role in the early onset of apoptosis. Phosphorylates S100A9 at 'Thr-113'. Phosphorylates NLRP1 downstream of MAP3K20/ZAK in response to UV-B irradiation and ribosome collisions, promoting activation of the NLRP1 inflammasome and pyroptosis. (Microbial infection) Activated by phosphorylation by M.tuberculosis EsxA in T-cells leading to inhibition of IFN-gamma production; phosphorylation is apparent within 15 minutes and is inhibited by kinase-specific inhibitors SB203580 and siRNA. This chain is Mitogen-activated protein kinase 14, found in Homo sapiens (Human).